Reading from the N-terminus, the 482-residue chain is Aspartyl/glutamyl-tRNA(Asn/Gln) amidotransferase subunit B (482 aa).

Belongs to the GatB/GatE family. GatB subfamily. In terms of assembly, heterotrimer of A, B and C subunits.

It carries out the reaction L-glutamyl-tRNA(Gln) + L-glutamine + ATP + H2O = L-glutaminyl-tRNA(Gln) + L-glutamate + ADP + phosphate + H(+). The catalysed reaction is L-aspartyl-tRNA(Asn) + L-glutamine + ATP + H2O = L-asparaginyl-tRNA(Asn) + L-glutamate + ADP + phosphate + 2 H(+). Allows the formation of correctly charged Asn-tRNA(Asn) or Gln-tRNA(Gln) through the transamidation of misacylated Asp-tRNA(Asn) or Glu-tRNA(Gln) in organisms which lack either or both of asparaginyl-tRNA or glutaminyl-tRNA synthetases. The reaction takes place in the presence of glutamine and ATP through an activated phospho-Asp-tRNA(Asn) or phospho-Glu-tRNA(Gln). The sequence is that of Aspartyl/glutamyl-tRNA(Asn/Gln) amidotransferase subunit B from Azotobacter vinelandii (strain DJ / ATCC BAA-1303).